The chain runs to 95 residues: uncharacterized protein (95 aa).

This is an uncharacterized protein from Human adenovirus B serotype 7 (HAdV-7).